The primary structure comprises 170 residues: Fluoride-specific ion channel FluC 2 (170 aa).

The next 4 helical transmembrane spans lie at 8 to 28 (ALVFLGGALGAIIRWTLTVWI), 55 to 75 (IALLVVNVLGALLLGLLVGMI), 84 to 104 (TFWGTGVLGGFTSFSSLAAAV), and 114 to 134 (ILIGGTYGVFTLALGLIAAAM). The Na(+) site is built by G92 and T95.

Belongs to the fluoride channel Fluc/FEX (TC 1.A.43) family.

Its subcellular location is the cell membrane. The catalysed reaction is fluoride(in) = fluoride(out). Its activity is regulated as follows. Na(+) is not transported, but it plays an essential structural role and its presence is essential for fluoride channel function. Its function is as follows. Fluoride-specific ion channel. Important for reducing fluoride concentration in the cell, thus reducing its toxicity. The sequence is that of Fluoride-specific ion channel FluC 2 from Corynebacterium jeikeium (strain K411).